An 899-amino-acid chain; its full sequence is Pre-mRNA-splicing factor 6 (899 aa).

Positions 1 to 65 (MERPSFLDQE…QSQPKDDEDD (65 aa)) are disordered. The segment covering 28–51 (TKEKQVVSNDDKGRRIPKRYRENL) has biased composition (basic and acidic residues). HAT repeat units lie at residues 221–253 (EDLQ…LEEK), 255–287 (RKFS…LHES), 289–318 (VHYC…DLES), 319–350 (TTVN…FEAD), 352–381 (AQVI…LQSY), 383–414 (NAKM…RNNP), 493–525 (PHSK…ATES), 545–578 (NSDD…DTRQ), 608–645 (LQLD…FLRY), 648–680 (LNEE…IYHS), 682–714 (GNIE…IDEI), 751–783 (GNLD…LFKH), and 819–851 (AQYE…TYAR).

In terms of assembly, component of the U4/U6-U5 tri-snRNP complex composed of the U4, U6 and U5 snRNAs and at least PRP3, PRP4, PRP6, PRP8, PRP18, PRP31, PRP38, SNU13, SNU23, SNU66, SNU114, SPP381, SMB1, SMD1, SMD2, SMD3, SMX2, SMX3, LSM2, LSM3, LSM4, LSM5, LSM6, LSM7, LSM8, BRR2 and DIB1.

Its subcellular location is the nucleus. Its function is as follows. Participates in pre-mRNA splicing. Part of the U4/U5/U6 tri-snRNP complex, one of the building blocks of the spliceosome. The protein is Pre-mRNA-splicing factor 6 (PRP6) of Saccharomyces cerevisiae (strain ATCC 204508 / S288c) (Baker's yeast).